A 544-amino-acid polypeptide reads, in one-letter code: Chaperonin GroEL 2 (544 aa).

Residues 29–32 (TLGP), 86–90 (DGTTT), G413, 479–481 (NAA), and D495 each bind ATP.

It belongs to the chaperonin (HSP60) family. As to quaternary structure, forms a cylinder of 14 subunits composed of two heptameric rings stacked back-to-back. Interacts with the co-chaperonin GroES.

It is found in the cytoplasm. The enzyme catalyses ATP + H2O + a folded polypeptide = ADP + phosphate + an unfolded polypeptide.. Together with its co-chaperonin GroES, plays an essential role in assisting protein folding. The GroEL-GroES system forms a nano-cage that allows encapsulation of the non-native substrate proteins and provides a physical environment optimized to promote and accelerate protein folding. The chain is Chaperonin GroEL 2 from Synechococcus sp. (strain WH7803).